The chain runs to 178 residues: RNA-binding protein (178 aa).

The tract at residues 108–178 (SGFQKPKIGS…KGKGRRGGKR (71 aa)) is disordered. Positions 168–178 (SKGKGRRGGKR) are enriched in basic residues.

It belongs to the phytoreovirus RNA-binding protein family.

It localises to the host cytoplasm. Functionally, constituent of viral factories. Binds to ssRNA and dsRNA. The polypeptide is RNA-binding protein (Wound tumor virus (strain NJ) (WTV)).